Here is a 406-residue protein sequence, read N- to C-terminus: MGHDIDQVAPLLREPANFQLRTNCDPHEDNFGLRAHGPLVRIVGESSTQLGRDFVWQAHGYEVVRRILGDHEHFTTRPQFTQSKSGAHVEAQFVGQISTYDPPEHTRLRKMLTPEFTVRRIRRMEPAIQSLIDDRLDLLEAEGPSADLQGLFADPVGAHALCELLGIPRDDQREFVRRIRRNADLSRGLKARAADSAAFNRYLDNLLARQRADPDDGLLGMIVRDHGDNVTDEELKGLCTALILGGVETVAGMIGFGVLALLDNPGQIELLFESPEKAERVVNELVRYLSPVQAPNPRLAIKDVVIDGQLIKAGDYVLCSILMANRDEALTPDPDVLDANRAAVSDVGFGHGIHYCVGAALARSMLRMAYQTLWRRFPGLRLAVPIEEVKYRSAFVDCPDQVPVTW.

Position 356 (Cys356) interacts with heme.

Belongs to the cytochrome P450 family. It depends on heme as a cofactor.

It participates in antibiotic biosynthesis; vancomycin biosynthesis. Its function is as follows. Involved in the coupling of aromatic side chains of the heptapeptide of vancomycin. The polypeptide is Cytochrome P450 165C4 (cyp165C4) (Amycolatopsis orientalis (Nocardia orientalis)).